The chain runs to 281 residues: DegV domain-containing protein CPE2509 (281 aa).

A DegV domain is found at Ile4–Lys279. Hexadecanoate contacts are provided by Thr60 and Ser93.

Functionally, may bind long-chain fatty acids, such as palmitate, and may play a role in lipid transport or fatty acid metabolism. In Clostridium perfringens (strain 13 / Type A), this protein is DegV domain-containing protein CPE2509.